Consider the following 479-residue polypeptide: Ammonium transporter Rh type C (479 aa).

Residues 1–9 (MAWNTNLRW) are Cytoplasmic-facing. A helical membrane pass occupies residues 10 to 30 (RLPLTCLLLQVIMVILFGVFV). Topologically, residues 31-60 (RYDFEADAHWWSERTHKNLSDMENEFYYRY) are extracellular. N48 carries an N-linked (GlcNAc...) asparagine glycan. The chain crosses the membrane as a helical span at residues 61 to 81 (PSFQDVHVMVFVGFGFLMTFL). Over 82–85 (QRYG) the chain is Cytoplasmic. The helical transmembrane segment at 86 to 106 (FSAVGFNFLLAAFGIQWALLM) threads the bilayer. The Extracellular segment spans residues 107–123 (QGWFHFLQDRYIVVGVE). A helical transmembrane segment spans residues 124–144 (NLINADFCVASVCVAFGAVLG). Residues 145–148 (KVSP) lie on the Cytoplasmic side of the membrane. A helical transmembrane segment spans residues 149–169 (IQLLIMTFFQVTLFAVNEFIL). Residues 170–177 (LNLLKVKD) lie on the Extracellular side of the membrane. A helical transmembrane segment spans residues 178–200 (AGGSMTIHTFGAYFGLTVTRILY). The Cytoplasmic segment spans residues 201-218 (RRNLEQSKERQNSVYQSD). Residues 219 to 239 (LFAMIGTLFLWMYWPSFNSAI) traverse the membrane as a helical segment. Residues 240–250 (SYHGDSQHRAA) lie on the Extracellular side of the membrane. Residues 251-271 (INTYCSLAACVLTSVAISSAL) form a helical membrane-spanning segment. The Cytoplasmic segment spans residues 272–281 (HKKGKLDMVH). Residues 282-302 (IQNATLAGGVAVGTAAEMMLM) traverse the membrane as a helical segment. Residue P303 is a topological domain, extracellular. Residues 304–324 (YGALIIGFVCGIISTLGFVYL) traverse the membrane as a helical segment. Topologically, residues 325-345 (TPFLESRLHIQDTCGINNLHG) are cytoplasmic. Residues 346–366 (IPGIIGGIVGAVTAASASLEV) traverse the membrane as a helical segment. Topologically, residues 367–394 (YGKEGLVHSFDFQGFNGDWTARTQGKFQ) are extracellular. The chain crosses the membrane as a helical span at residues 395–415 (IYGLLVTLAMALMGGIIVGLI). Residues 416 to 479 (LRLPFWGQPS…PMASSVPLVP (64 aa)) are Cytoplasmic-facing.

This sequence belongs to the ammonium transporter (TC 2.A.49) family. Rh subfamily. In terms of assembly, homotrimer. N-glycosylated. Expressed in brain, testis, placenta, pancreas, esophagus and prostate. Expressed in squamous epithelial tissues (at protein level). Expressed in kidney.

The protein resides in the cell membrane. It is found in the apical cell membrane. It catalyses the reaction NH4(+)(in) = NH4(+)(out). The catalysed reaction is methylamine(out) = methylamine(in). The enzyme catalyses CO2(out) = CO2(in). In terms of biological role, ammonium transporter involved in the maintenance of acid-base homeostasis. Transports ammonium and its related derivative methylammonium across the plasma membrane of epithelial cells likely contributing to renal transepithelial ammonia transport and ammonia metabolism. Postulated to primarily mediate an electroneutral bidirectional transport of NH3 ammonia species according to a mechanism that implies interaction of an NH4(+) ion with acidic residues of the pore entry followed by dissociation of NH4(+) into NH3 and H(+). As a result NH3 transits through the central pore and is protonated on the extracellular side reforming NH4(+). May act as a CO2 channel providing for renal acid secretion. The polypeptide is Ammonium transporter Rh type C (RHCG) (Homo sapiens (Human)).